The chain runs to 253 residues: ATP synthase subunit a (253 aa).

Transmembrane regions (helical) follow at residues 34 to 54 (SSLF…LSFY), 89 to 109 (YFPF…IGMI), 118 to 138 (HIVF…LIGI), 156 to 178 (LAIV…FTLS), 203 to 223 (LSAG…LLAL), and 226 to 246 (LELA…CIYL).

The protein belongs to the ATPase A chain family. In terms of assembly, F-type ATPases have 2 components, CF(1) - the catalytic core - and CF(0) - the membrane proton channel. CF(1) has five subunits: alpha(3), beta(3), gamma(1), delta(1), epsilon(1). CF(0) has three main subunits: a, b and c.

It is found in the mitochondrion inner membrane. Its function is as follows. Mitochondrial membrane ATP synthase (F(1)F(0) ATP synthase or Complex V) produces ATP from ADP in the presence of a proton gradient across the membrane which is generated by electron transport complexes of the respiratory chain. F-type ATPases consist of two structural domains, F(1) - containing the extramembraneous catalytic core and F(0) - containing the membrane proton channel, linked together by a central stalk and a peripheral stalk. During catalysis, ATP synthesis in the catalytic domain of F(1) is coupled via a rotary mechanism of the central stalk subunits to proton translocation. Key component of the proton channel; it may play a direct role in the translocation of protons across the membrane. The chain is ATP synthase subunit a (ATP6) from Chondrus crispus (Carrageen Irish moss).